Reading from the N-terminus, the 221-residue chain is UPF0758 protein HI_0952 (221 aa).

An MPN domain is found at isoleucine 99 to leucine 221. Zn(2+) contacts are provided by histidine 170, histidine 172, and aspartate 183. A JAMM motif motif is present at residues histidine 170–aspartate 183.

It belongs to the UPF0758 family.

The polypeptide is UPF0758 protein HI_0952 (Haemophilus influenzae (strain ATCC 51907 / DSM 11121 / KW20 / Rd)).